The sequence spans 982 residues: MLKAKALCYRFFKSRKATTCALSSELFPSTSAAVFSAASGDHRSRCLSLIVKLGRRGLLDSAREVIRRVIDGSSSISEAALVADFAVDNGIELDSSCYGALIRKLTEMGQPGVAETFYNQRVIGNGIVPDSSVLDSMVFCLVKLRRFDEARAHLDRIIASGYAPSRNSSSLVVDELCNQDRFLEAFHCFEQVKERGSGLWLWCCKRLFKGLCGHGHLNEAIGMLDTLCGMTRMPLPVNLYKSLFYCFCKRGCAAEAEALFDHMEVDGYYVDKVMYTCLMKEYCKDNNMTMAMRLYLRMVERSFELDPCIFNTLIHGFMKLGMLDKGRVMFSQMIKKGVQSNVFTYHIMIGSYCKEGNVDYALRLFVNNTGSEDISRNVHCYTNLIFGFYKKGGMDKAVDLLMRMLDNGIVPDHITYFVLLKMLPKCHELKYAMVILQSILDNGCGINPPVIDDLGNIEVKVESLLGEIARKDANLAAVGLAVVTTALCSQRNYIAALSRIEKMVNLGCTPLPFSYNSVIKCLFQENIIEDLASLVNIIQELDFVPDVDTYLIVVNELCKKNDRDAAFAIIDAMEELGLRPTVAIYSSIIGSLGKQGRVVEAEETFAKMLESGIQPDEIAYMIMINTYARNGRIDEANELVEEVVKHFLRPSSFTYTVLISGFVKMGMMEKGCQYLDKMLEDGLSPNVVLYTALIGHFLKKGDFKFSFTLFGLMGENDIKHDHIAYITLLSGLWRAMARKKKRQVIVEPGKEKLLQRLIRTKPLVSIPSSLGNYGSKSFAMEVIGKVKKSIIPNLYLHNTIITGYCAAGRLDEAYNHLESMQKEGIVPNLVTYTILMKSHIEAGDIESAIDLFEGTNCEPDQVMYSTLLKGLCDFKRPLDALALMLEMQKSGINPNKDSYEKLLQCLCYSRLTMEAVKVVKDMAALDIWPRSINHTWLIYILCEEKKLREARALFAIMVQSGRSLLNCTKPGLLKMLNQNQQL.

PPR repeat units lie at residues 94–129 (DSSC…GIVP), 130–164 (DSSV…GYAP), 165–199 (SRNS…GSGL), 200–234 (WLWC…TRMP), 236–270 (PVNL…GYYV), 271–305 (DKVM…SFEL), 306–340 (DPCI…GVQS), 341–376 (NVFT…DISR), 377–411 (NVHC…GIVP), 412–446 (DHIT…GCGI), 476–510 (AAVG…GCTP), 511–545 (LPFS…DFVP), 546–580 (DVDT…GLRP), 581–615 (TVAI…GIQP), 616–650 (DEIA…FLRP), 651–685 (SSFT…GLSP), 686–720 (NVVL…DIKH), 721–755 (DHIA…KLLQ), 759–789 (RTKP…VKKS), 793–827 (NLYL…GIVP), 828–858 (NLVT…TNCE), 860–894 (DQVM…GINP), 895–929 (NKDS…DIWP), and 930–964 (RSIN…GRSL).

This sequence belongs to the PPR family. P subfamily.

The protein is Pentatricopeptide repeat-containing protein At5g62370 of Arabidopsis thaliana (Mouse-ear cress).